A 134-amino-acid chain; its full sequence is Iron-sulfur cluster insertion protein ErpA (134 aa).

Iron-sulfur cluster contacts are provided by Cys47, Cys126, and Cys128.

Belongs to the HesB/IscA family. In terms of assembly, homodimer. The cofactor is iron-sulfur cluster.

In terms of biological role, required for insertion of 4Fe-4S clusters for at least IspG. The protein is Iron-sulfur cluster insertion protein ErpA of Coxiella burnetii (strain Dugway 5J108-111).